The following is a 92-amino-acid chain: Small ribosomal subunit protein uS19c (92 aa).

The protein belongs to the universal ribosomal protein uS19 family.

The protein localises to the plastid. It is found in the chloroplast. Its function is as follows. Protein S19 forms a complex with S13 that binds strongly to the 16S ribosomal RNA. The polypeptide is Small ribosomal subunit protein uS19c (Pinus koraiensis (Korean pine)).